We begin with the raw amino-acid sequence, 270 residues long: Sec-independent protein translocase protein TatC (270 aa).

6 helical membrane passes run 35 to 55 (LILSVVFLAVGMVIAFTYRVQ), 93 to 113 (AFWAGLTLALPFIVWQIWAFI), 124 to 144 (WGLPFILGAGFAFAAGVVFGY), 176 to 196 (VVTFLVAFGVAFELPILAVIL), 209 to 229 (QGWRFALIGIMILAAVITPTP), and 231 to 251 (PANMALVAVPLYALYELGVVL).

It belongs to the TatC family. Forms a complex with TatA.

It localises to the cell membrane. Functionally, part of the twin-arginine translocation (Tat) system that transports large folded proteins containing a characteristic twin-arginine motif in their signal peptide across membranes. This is Sec-independent protein translocase protein TatC from Deinococcus radiodurans (strain ATCC 13939 / DSM 20539 / JCM 16871 / CCUG 27074 / LMG 4051 / NBRC 15346 / NCIMB 9279 / VKM B-1422 / R1).